The sequence spans 177 residues: Small ribosomal subunit protein bS16 (177 aa).

The disordered stretch occupies residues 80–177 (GIIAMPANGS…AAEAPKEEAK (98 aa)). A compositionally biased stretch (low complexity) spans 107-122 (AAPAAAPKAEAAPAAE).

This sequence belongs to the bacterial ribosomal protein bS16 family.

This chain is Small ribosomal subunit protein bS16, found in Pelagibacter ubique (strain HTCC1062).